Here is a 533-residue protein sequence, read N- to C-terminus: Drimenyl diphosphate synthase (533 aa).

The (2E,6E)-farnesyl diphosphate site is built by Arg-132, Lys-133, Gln-163, and Trp-165. Glu-169 serves as a coordination point for Mg(2+). PFTB repeat units lie at residues 274-316 (VTPM…RRAA), 324-366 (VAEA…AHDP), 372-415 (VDEA…AAHG), 425-466 (AERA…ARGP), and 474-517 (LDRA…FVLL). Catalysis depends on Asp-303, which acts as the Proton donor. (2E,6E)-farnesyl diphosphate is bound at residue Arg-501.

Belongs to the terpene cyclase/mutase family. Mg(2+) is required as a cofactor. Requires Ni(2+) as cofactor. It depends on Co(2+) as a cofactor.

The enzyme catalyses (2E,6E)-farnesyl diphosphate = (5S,9S,10S)-drim-7-en-11-yl diphosphate. Its function is as follows. Catalyzes the cyclization of farnesyl diphosphate (FPP) to drimenyl diphosphate. Cannot use geranylgeranyl diphosphate (GGPP) as substrate. This Streptomyces showdoensis protein is Drimenyl diphosphate synthase.